The chain runs to 33 residues: MSDIN-like toxin proprotein 2 (33 aa).

The propeptide occupies 1-10 (MSDINATRLP). The segment at residues 11–18 (IILAPIIP) is a cross-link (cyclopeptide (Ile-Pro)). Positions 19-33 (CINDDVNSTLTSGER) are excised as a propeptide.

This sequence belongs to the MSDIN fungal toxin family. Post-translationally, processed by the macrocyclase-peptidase enzyme POPB to yield a toxic cyclic octapeptide. POPB first removes 10 residues from the N-terminus. Conformational trapping of the remaining peptide forces the enzyme to release this intermediate rather than proceed to macrocyclization. The enzyme rebinds the remaining peptide in a different conformation and catalyzes macrocyclization of the N-terminal 8 residues.

Probable toxin that belongs to the MSDIN-like toxin family responsible for a large number of food poisoning cases and deaths. The sequence is that of MSDIN-like toxin proprotein 2 from Amanita phalloides (Death cap).